Consider the following 597-residue polypeptide: MQHDRPGSRPEEGGEQQIGGDAELNSQIRLLEDEVALLRRKLNESPQQVRLLEKRLAEASERVSQLTERNAKLTETLKEARSQLMALREEVDRLAQPPSGYGVFLHAYEDSTVDVFTSGRKMRVSVSPNVATEDLRLGQSVRLNEALTVVEAGAFEQTGEVCTFRELLPVDAVTRSPRALVLGHTDEERVVWVTEPLAESGLKAGDSVLVDSKAGYAYDLVPKAEVEDLVLEEVPDVGYNDIGGLGNQIEQIRDAVELPFLHSDLYVEYQLRPPKGVLLYGPPGCGKTLIAKAVANSLAKKVAASRGDDDGQAKSYFLNIKGPELLNKFVGETERHIRLIFQRAREKASEGTPVIVFFDEMDSIFRTRGSGVSSDVETTIVPQLLSEIDGVEGLENVIVIGASNREDMIDPAILRPGRLDVKIKIERPDAESAKDIFSKYLTRQLPIHEEDLKEFGGDQASCVEAMIQTTVERMYAETDENRFLEVTYANGDKEVLYFKDFNSGAMIQNIVDRAKKAAIKAVLETGQPGLRVQHLQDAIIDEFAENEDLPNTTNPDDWARISGKKGERIVYIRTLVSGKNQESGRAIDTATNTGQYL.

Over residues 1-12 (MQHDRPGSRPEE) the composition is skewed to basic and acidic residues. Positions 1–22 (MQHDRPGSRPEEGGEQQIGGDA) are disordered. Positions 21 to 97 (DAELNSQIRL…REEVDRLAQP (77 aa)) form a coiled coil. 284 to 289 (GCGKTL) is a binding site for ATP. Residues 596 to 597 (YL) are docks into pockets in the proteasome alpha-ring.

Belongs to the AAA ATPase family. As to quaternary structure, homohexamer. Assembles into a hexameric ring structure that caps the 20S proteasome core. Strongly interacts with the prokaryotic ubiquitin-like protein Pup through a hydrophobic interface; the interacting region of ARC lies in its N-terminal coiled-coil domain. There is one Pup binding site per ARC hexamer ring. Upon ATP-binding, the C-terminus of ARC interacts with the alpha-rings of the proteasome core, possibly by binding to the intersubunit pockets.

It participates in protein degradation; proteasomal Pup-dependent pathway. ATPase which is responsible for recognizing, binding, unfolding and translocation of pupylated proteins into the bacterial 20S proteasome core particle. May be essential for opening the gate of the 20S proteasome via an interaction with its C-terminus, thereby allowing substrate entry and access to the site of proteolysis. Thus, the C-termini of the proteasomal ATPase may function like a 'key in a lock' to induce gate opening and therefore regulate proteolysis. The chain is Proteasome-associated ATPase from Saccharopolyspora erythraea (strain ATCC 11635 / DSM 40517 / JCM 4748 / NBRC 13426 / NCIMB 8594 / NRRL 2338).